The chain runs to 330 residues: Fructose-1,6-bisphosphatase class 1 (330 aa).

The Mg(2+) site is built by Glu-84, Asp-103, Leu-105, and Asp-106. Substrate is bound by residues 106 to 109 (DGSS), Asn-196, and Lys-262. Glu-268 serves as a coordination point for Mg(2+).

Belongs to the FBPase class 1 family. As to quaternary structure, homotetramer. It depends on Mg(2+) as a cofactor.

The protein localises to the cytoplasm. The enzyme catalyses beta-D-fructose 1,6-bisphosphate + H2O = beta-D-fructose 6-phosphate + phosphate. It functions in the pathway carbohydrate biosynthesis; gluconeogenesis. The protein is Fructose-1,6-bisphosphatase class 1 of Shewanella sp. (strain W3-18-1).